The chain runs to 449 residues: Glycine--tRNA ligase (449 aa).

Arg-100 and Glu-158 together coordinate substrate. ATP contacts are provided by residues 190-192, 200-205, 275-276, and 319-322; these read RNE, FRVREF, EL, and GIER. A substrate-binding site is contributed by 205–209; sequence FEQFE. Residue 315 to 319 coordinates substrate; that stretch reads EPSVG.

Belongs to the class-II aminoacyl-tRNA synthetase family. As to quaternary structure, homodimer.

The protein localises to the cytoplasm. It catalyses the reaction tRNA(Gly) + glycine + ATP = glycyl-tRNA(Gly) + AMP + diphosphate. Catalyzes the attachment of glycine to tRNA(Gly). The sequence is that of Glycine--tRNA ligase from Mycoplasma pneumoniae (strain ATCC 29342 / M129 / Subtype 1) (Mycoplasmoides pneumoniae).